Consider the following 191-residue polypeptide: Holliday junction branch migration complex subunit RuvA (191 aa).

Positions 1-64 (MIGRITGTLA…EDAHLLYGFG (64 aa)) are domain I. The interval 65–138 (SEVERAAFRE…KGKPVFAGAL (74 aa)) is domain II. Positions 138 to 141 (LASV) are flexible linker. Residues 142–191 (PSAGASDDVRQALLALGYNERETAATVRELPAGLAVGEAIRQALRALSRA) form a domain III region.

The protein belongs to the RuvA family. In terms of assembly, homotetramer. Forms an RuvA(8)-RuvB(12)-Holliday junction (HJ) complex. HJ DNA is sandwiched between 2 RuvA tetramers; dsDNA enters through RuvA and exits via RuvB. An RuvB hexamer assembles on each DNA strand where it exits the tetramer. Each RuvB hexamer is contacted by two RuvA subunits (via domain III) on 2 adjacent RuvB subunits; this complex drives branch migration. In the full resolvosome a probable DNA-RuvA(4)-RuvB(12)-RuvC(2) complex forms which resolves the HJ.

It localises to the cytoplasm. The RuvA-RuvB-RuvC complex processes Holliday junction (HJ) DNA during genetic recombination and DNA repair, while the RuvA-RuvB complex plays an important role in the rescue of blocked DNA replication forks via replication fork reversal (RFR). RuvA specifically binds to HJ cruciform DNA, conferring on it an open structure. The RuvB hexamer acts as an ATP-dependent pump, pulling dsDNA into and through the RuvAB complex. HJ branch migration allows RuvC to scan DNA until it finds its consensus sequence, where it cleaves and resolves the cruciform DNA. The chain is Holliday junction branch migration complex subunit RuvA from Thiobacillus denitrificans (strain ATCC 25259 / T1).